The sequence spans 169 residues: Translationally-controlled tumor protein homolog (169 aa).

In terms of domain architecture, TCTP spans 1–169; sequence MIIYKDIVSG…FKDGLEEEKF (169 aa).

Belongs to the TCTP family.

It is found in the cytoplasm. In terms of biological role, involved in calcium binding and microtubule stabilization. This Branchiostoma belcheri (Amphioxus) protein is Translationally-controlled tumor protein homolog.